Here is a 331-residue protein sequence, read N- to C-terminus: 6-phosphogluconolactonase (331 aa).

It belongs to the cycloisomerase 2 family.

The catalysed reaction is 6-phospho-D-glucono-1,5-lactone + H2O = 6-phospho-D-gluconate + H(+). The protein operates within carbohydrate degradation; pentose phosphate pathway; D-ribulose 5-phosphate from D-glucose 6-phosphate (oxidative stage): step 2/3. Functionally, catalyzes the hydrolysis of 6-phosphogluconolactone to 6-phosphogluconate. The protein is 6-phosphogluconolactonase of Enterobacter sp. (strain 638).